The following is a 551-amino-acid chain: Cytochrome c oxidase subunit 1 (551 aa).

A helical membrane pass occupies residues 34–54 (TLYLYSGVWGGLFGASLSLMI). A Ca(2+)-binding site is contributed by Gly62. His79 lines the Fe(II)-heme a pocket. A run of 6 helical transmembrane segments spans residues 81–101 (LMMIFFAVMPILIEAFGNWLI), 126–146 (ALYLLMLSFSTDKGVGAGWTI), 163–183 (VLIVSLHLAGLSSLVGAINFA), 209–229 (TAVLLIISIPVLGGGITMILF), 252–272 (LFWFFGHPEVYILILPAFGVM), and 285–305 (VFGLIGMVYAMIGIGGLGCMV). His258 lines the Cu cation pocket. The 1'-histidyl-3'-tyrosine (His-Tyr) cross-link spans 258-262 (HPEVY). Position 262 (Tyr262) interacts with O2. 2 residues coordinate Cu cation: His308 and His309. Transmembrane regions (helical) follow at residues 326–346 (ATMVIAVPTGVKVFSWLATMA) and 356–376 (AYWSTGFLFLFTVGGLTGVLL). Mg(2+)-binding residues include His386 and Asp387. Transmembrane regions (helical) follow at residues 391 to 411 (VVAHFHYVLSMGAVFGVFCGL), 432 to 452 (FMAMFFGVNTTFFPQHFLGLS), and 475 to 495 (GSAVSFGSLMYFKFLLWEALV). His394 provides a ligand contact to heme a3. Residue His396 participates in Fe(II)-heme a binding.

Belongs to the heme-copper respiratory oxidase family. As to quaternary structure, component of the cytochrome c oxidase (complex IV, CIV), a multisubunit enzyme composed of a catalytic core of 3 subunits and several supernumerary subunits. The complex exists as a monomer or a dimer and forms supercomplexes (SCs) in the inner mitochondrial membrane with ubiquinol-cytochrome c oxidoreductase (cytochrome b-c1 complex, complex III, CIII). It depends on heme as a cofactor. Requires Cu cation as cofactor.

It is found in the mitochondrion inner membrane. The catalysed reaction is 4 Fe(II)-[cytochrome c] + O2 + 8 H(+)(in) = 4 Fe(III)-[cytochrome c] + 2 H2O + 4 H(+)(out). The protein operates within energy metabolism; oxidative phosphorylation. Component of the cytochrome c oxidase, the last enzyme in the mitochondrial electron transport chain which drives oxidative phosphorylation. The respiratory chain contains 3 multisubunit complexes succinate dehydrogenase (complex II, CII), ubiquinol-cytochrome c oxidoreductase (cytochrome b-c1 complex, complex III, CIII) and cytochrome c oxidase (complex IV, CIV), that cooperate to transfer electrons derived from NADH and succinate to molecular oxygen, creating an electrochemical gradient over the inner membrane that drives transmembrane transport and the ATP synthase. Cytochrome c oxidase is the component of the respiratory chain that catalyzes the reduction of oxygen to water. Electrons originating from reduced cytochrome c in the intermembrane space (IMS) are transferred via the dinuclear copper A center (CU(A)) of subunit 2 and heme A of subunit 1 to the active site in subunit 1, a binuclear center (BNC) formed by heme A3 and copper B (CU(B)). The BNC reduces molecular oxygen to 2 water molecules using 4 electrons from cytochrome c in the IMS and 4 protons from the mitochondrial matrix. This is Cytochrome c oxidase subunit 1 (COI) from Mytilus edulis (Blue mussel).